A 370-amino-acid polypeptide reads, in one-letter code: Putative agmatine deiminase (370 aa).

Residue Cys-361 is the Amidino-cysteine intermediate of the active site.

Belongs to the agmatine deiminase family.

The catalysed reaction is agmatine + H2O = N-carbamoylputrescine + NH4(+). This Shewanella baltica (strain OS223) protein is Putative agmatine deiminase.